We begin with the raw amino-acid sequence, 140 residues long: uncharacterized protein (140 aa).

This is an uncharacterized protein from Archaeoglobus fulgidus (strain ATCC 49558 / DSM 4304 / JCM 9628 / NBRC 100126 / VC-16).